The following is a 486-amino-acid chain: 3-dehydroshikimate dehydratase (486 aa).

The catalysed reaction is 3-dehydroshikimate = 3,4-dihydroxybenzoate + H2O. It participates in aromatic compound metabolism; 3,4-dihydroxybenzoate biosynthesis; 3,4-dihydroxybenzoate from 3-dehydroquinate: step 2/2. Converts dehydroshikimate to protocatechuate. The protein is 3-dehydroshikimate dehydratase (quiC) of Acinetobacter baylyi (strain ATCC 33305 / BD413 / ADP1).